The chain runs to 275 residues: uncharacterized protein (275 aa).

The segment covering T148 to P158 has biased composition (polar residues). The interval T148–E173 is disordered. A helical transmembrane segment spans residues I187–E207. The disordered stretch occupies residues G234–A264. Positions D245–P261 are enriched in polar residues.

Its subcellular location is the membrane. This is an uncharacterized protein from Homo sapiens (Human).